The sequence spans 216 residues: 7-carboxy-7-deazaguanine synthase (216 aa).

Substrate is bound by residues 12 to 14 (LQG) and R27. In terms of domain architecture, Radical SAM core spans 18-216 (RAGRAAVFCR…LQTHKYLGIP (199 aa)). [4Fe-4S] cluster contacts are provided by C31, C46, and C49. T51 provides a ligand contact to Mg(2+). T93 contacts substrate. Residues G95, 136-138 (SPK), and 176-179 (QPRD) contribute to the S-adenosyl-L-methionine site. A substrate-binding site is contributed by P216.

It belongs to the radical SAM superfamily. 7-carboxy-7-deazaguanine synthase family. Homodimer. The cofactor is [4Fe-4S] cluster. S-adenosyl-L-methionine serves as cofactor. It depends on Mg(2+) as a cofactor.

It catalyses the reaction 6-carboxy-5,6,7,8-tetrahydropterin + H(+) = 7-carboxy-7-deazaguanine + NH4(+). It functions in the pathway purine metabolism; 7-cyano-7-deazaguanine biosynthesis. Its function is as follows. Catalyzes the complex heterocyclic radical-mediated conversion of 6-carboxy-5,6,7,8-tetrahydropterin (CPH4) to 7-carboxy-7-deazaguanine (CDG), a step common to the biosynthetic pathways of all 7-deazapurine-containing compounds. The protein is 7-carboxy-7-deazaguanine synthase of Nitratidesulfovibrio vulgaris (strain ATCC 29579 / DSM 644 / CCUG 34227 / NCIMB 8303 / VKM B-1760 / Hildenborough) (Desulfovibrio vulgaris).